A 299-amino-acid chain; its full sequence is Troponin T, cardiac muscle (299 aa).

Residues 1 to 71 (MSDAEEEVVE…EARDAEDGPV (71 aa)) show a composition bias toward acidic residues. 2 disordered regions span residues 1-97 (MSDA…GERV) and 137-220 (DRIE…EKKK). Residue Ser-2 is modified to N-acetylserine. A Phosphoserine modification is found at Ser-2. Composition is skewed to basic and acidic residues over residues 137–185 (DRIE…DEAR) and 204–220 (QTER…EKKK). Thr-205 is subject to Phosphothreonine; by PKC/PRKCA. The residue at position 209 (Ser-209) is a Phosphoserine; by PKC/PRKCA. Thr-214 carries the post-translational modification Phosphothreonine; by PKC/PRKCA and RAF1. Thr-295 carries the phosphothreonine; by PKC/PRKCA modification.

Belongs to the troponin T family. Post-translationally, phosphorylation at Thr-214 by PRKCA induces significant reduction in myofilament calcium sensitivity and actomyosin ATPase activity.

In terms of biological role, troponin T is the tropomyosin-binding subunit of troponin, the thin filament regulatory complex which confers calcium-sensitivity to striated muscle actomyosin ATPase activity. The polypeptide is Troponin T, cardiac muscle (Tnnt2) (Rattus norvegicus (Rat)).